We begin with the raw amino-acid sequence, 125 residues long: Fumarate reductase subunit D (125 aa).

Transmembrane regions (helical) follow at residues 30-50, 62-82, and 105-125; these read FAML…LGVI, AFAT…LPMW, and VACY…IFMI.

This sequence belongs to the FrdD family. In terms of assembly, part of an enzyme complex containing four subunits: a flavoprotein (FrdA), an iron-sulfur protein (FrdB), and two hydrophobic anchor proteins (FrdC and FrdD).

The protein localises to the cell inner membrane. Functionally, anchors the catalytic components of the fumarate reductase complex to the cell membrane, binds quinones. This is Fumarate reductase subunit D from Vibrio parahaemolyticus serotype O3:K6 (strain RIMD 2210633).